Here is a 412-residue protein sequence, read N- to C-terminus: Multifunctional CCA protein (412 aa).

The ATP site is built by Gly-8 and Arg-11. 2 residues coordinate CTP: Gly-8 and Arg-11. 2 residues coordinate Mg(2+): Glu-21 and Asp-23. The ATP site is built by Arg-91, Arg-137, and Arg-140. CTP contacts are provided by Arg-91, Arg-137, and Arg-140. The HD domain maps to 228–329 (CGIHTLMSLQ…WRLLQRLDVL (102 aa)).

Belongs to the tRNA nucleotidyltransferase/poly(A) polymerase family. Bacterial CCA-adding enzyme type 1 subfamily. In terms of assembly, monomer. Can also form homodimers and oligomers. Mg(2+) serves as cofactor. The cofactor is Ni(2+).

It catalyses the reaction a tRNA precursor + 2 CTP + ATP = a tRNA with a 3' CCA end + 3 diphosphate. The enzyme catalyses a tRNA with a 3' CCA end + 2 CTP + ATP = a tRNA with a 3' CCACCA end + 3 diphosphate. In terms of biological role, catalyzes the addition and repair of the essential 3'-terminal CCA sequence in tRNAs without using a nucleic acid template. Adds these three nucleotides in the order of C, C, and A to the tRNA nucleotide-73, using CTP and ATP as substrates and producing inorganic pyrophosphate. tRNA 3'-terminal CCA addition is required both for tRNA processing and repair. Also involved in tRNA surveillance by mediating tandem CCA addition to generate a CCACCA at the 3' terminus of unstable tRNAs. While stable tRNAs receive only 3'-terminal CCA, unstable tRNAs are marked with CCACCA and rapidly degraded. The chain is Multifunctional CCA protein from Acinetobacter baumannii (strain AB307-0294).